An 885-amino-acid polypeptide reads, in one-letter code: DNA mismatch repair protein MutS (885 aa).

626–633 provides a ligand contact to ATP; sequence GPNMGGKS.

Belongs to the DNA mismatch repair MutS family.

Its function is as follows. This protein is involved in the repair of mismatches in DNA. It is possible that it carries out the mismatch recognition step. This protein has a weak ATPase activity. This is DNA mismatch repair protein MutS from Burkholderia cenocepacia (strain HI2424).